The chain runs to 1131 residues: Probable secreted beta-glucosidase adg3 (1131 aa).

The N-terminal stretch at 1–23 (MPSKIEKICLLLLGFTAASNVNA) is a signal peptide. Residues asparagine 58, asparagine 123, asparagine 252, asparagine 551, asparagine 593, asparagine 631, and asparagine 689 are each glycosylated (N-linked (GlcNAc...) asparagine). The interval 609-819 (GTTSSTSEIV…SSPISSNSVT (211 aa)) is disordered. The segment covering 623–715 (SNSNTGSLNG…YSDPTTTITS (93 aa)) has biased composition (low complexity). The segment covering 716–725 (EVSSILSSPT) has biased composition (polar residues). Low complexity predominate over residues 726 to 737 (SMQSSVSRPQSS). The segment covering 738–763 (GDASGFNTIFTSISQSSDGETSGYTI) has biased composition (polar residues). Low complexity-rich tracts occupy residues 764–773 (SSNSSQNSAS) and 780–819 (TSSSSSATPTITQSSISTSVSSQSSMNSSYSSPISSNSVT). Asparagine 766, asparagine 806, and asparagine 857 each carry an N-linked (GlcNAc...) asparagine glycan. The span at 893–909 (STSNSGSTSYSIPSSSS) shows a compositional bias: low complexity. Positions 893–918 (STSNSGSTSYSIPSSSSRNEGTTSYS) are disordered. N-linked (GlcNAc...) asparagine glycosylation occurs at asparagine 920. Low complexity predominate over residues 977 to 1027 (LTVKPESSLSSSTTSGLTSSSSTIPSSTRSESNSESASTSSASKRSSSSTS). The segment at 977–1031 (LTVKPESSLSSSTTSGLTSSSSTIPSSTRSESNSESASTSSASKRSSSSTSLVQS) is disordered.

This sequence belongs to the SUN family.

The protein resides in the secreted. In terms of biological role, cell surface beta-glucosidase involved in cell wall biogenesis,. This Schizosaccharomyces pombe (strain 972 / ATCC 24843) (Fission yeast) protein is Probable secreted beta-glucosidase adg3 (adg3).